We begin with the raw amino-acid sequence, 254 residues long: MALSSTQAIPETGDIPRHVAIIMDGNGRWATRRHLPRTAGHAKGVHAVRRVVEACGRRGVRYLTLFAFSSENWRRPADEVSLLMRLFVQALEREVDKLQDQGVRLHVVGDLSAFEPKLQELIAQAQERTEHNDRLHLTVAANYGGRWDILQATRAMLRADPGLAQDPDRIDEARLAEHLSMAWAPEPDLFIRTGGEQRISNFLVWQLAYAEFYFTEQFWPDFGADELDAAFEWYRTRERRFGRTSAQLRGGAKR.

Asp24 is a catalytic residue. Asp24 lines the Mg(2+) pocket. Residues 25 to 28 (GNGR), Trp29, Arg37, His41, and 69 to 71 (SSE) each bind substrate. Residue Asn72 is the Proton acceptor of the active site. Residues Trp73, Arg75, Arg192, and 198–200 (RIS) each bind substrate. Glu211 is a Mg(2+) binding site.

This sequence belongs to the UPP synthase family. As to quaternary structure, homodimer. Mg(2+) is required as a cofactor.

Functionally, catalyzes the condensation of isopentenyl diphosphate (IPP) with allylic pyrophosphates generating different type of terpenoids. The chain is Isoprenyl transferase from Bordetella parapertussis (strain 12822 / ATCC BAA-587 / NCTC 13253).